The primary structure comprises 87 residues: MKFSLACLLALAGLQAALADPATCEKEAQFVKQELIGQPYTDAVANALQSNPIRVLHPGDMITMEYIASRLNIQVNENNEIISAHCA.

A signal peptide spans 1–19; that stretch reads MKFSLACLLALAGLQAALA. A disulfide bridge connects residues cysteine 24 and cysteine 86.

The protein localises to the secreted. Functionally, elastase inhibitor. This chain is Elastase inhibitor AFLEI, found in Aspergillus fumigatus (strain CBS 144.89 / FGSC A1163 / CEA10) (Neosartorya fumigata).